A 492-amino-acid polypeptide reads, in one-letter code: Malonate-semialdehyde dehydrogenase (492 aa).

Phe156, Lys180, Glu183, Lys184, Ser233, and Thr255 together coordinate NAD(+). The active-site Nucleophile is the Cys288. Glu387 serves as a coordination point for NAD(+).

The protein belongs to the aldehyde dehydrogenase family. IolA subfamily. In terms of assembly, homotetramer.

The catalysed reaction is 3-oxopropanoate + NAD(+) + CoA + H2O = hydrogencarbonate + acetyl-CoA + NADH + H(+). It carries out the reaction 2-methyl-3-oxopropanoate + NAD(+) + CoA + H2O = propanoyl-CoA + hydrogencarbonate + NADH + H(+). Its pathway is polyol metabolism; myo-inositol degradation into acetyl-CoA; acetyl-CoA from myo-inositol: step 7/7. Its function is as follows. Catalyzes the oxidation of malonate semialdehyde (MSA) and methylmalonate semialdehyde (MMSA) into acetyl-CoA and propanoyl-CoA, respectively. Is involved in a myo-inositol catabolic pathway. Bicarbonate, and not CO2, is the end-product of the enzymatic reaction. The protein is Malonate-semialdehyde dehydrogenase of Lacticaseibacillus casei (Lactobacillus casei).